Consider the following 415-residue polypeptide: Na(+)-translocating NADH-quinone reductase subunit B (415 aa).

Transmembrane regions (helical) follow at residues 23–40 (WFALYEAAATLFYTPGLV), 56–76 (IMIMVWLAVFPAMFWGMYNAG), 129–149 (FLPIYATVFIVGGFWEVLFCM), and 164–184 (ILFALIVPPTLPLWQAALGIT). Threonine 236 bears the FMN phosphoryl threonine mark. The next 5 membrane-spanning stretches (helical) occupy residues 275 to 295 (VSTLALMIGAAFIVYMGIASW), 297 to 317 (IIGGVMIGMILLSTLFNVIGS), 325 to 345 (MPWHWHLVLGGFAFGMFFMAT), 358 to 378 (WAYGILIGVMCVLIRVVNPAY), and 381 to 401 (GMMLAILFANLFAPLFDHVVV).

This sequence belongs to the NqrB/RnfD family. As to quaternary structure, composed of six subunits; NqrA, NqrB, NqrC, NqrD, NqrE and NqrF. The cofactor is riboflavin. It depends on FMN as a cofactor.

It is found in the cell inner membrane. The catalysed reaction is a ubiquinone + n Na(+)(in) + NADH + H(+) = a ubiquinol + n Na(+)(out) + NAD(+). In terms of biological role, NQR complex catalyzes the reduction of ubiquinone-1 to ubiquinol by two successive reactions, coupled with the transport of Na(+) ions from the cytoplasm to the periplasm. NqrA to NqrE are probably involved in the second step, the conversion of ubisemiquinone to ubiquinol. The polypeptide is Na(+)-translocating NADH-quinone reductase subunit B (Vibrio cholerae serotype O1 (strain ATCC 39541 / Classical Ogawa 395 / O395)).